The following is a 1239-amino-acid chain: Potassium channel subfamily T member 1 (1239 aa).

The tract at residues 1 to 45 is disordered; it reads MARAKLPRSPSEGKAGPGDTPAGSAAPEEPHGLSPLLPTRGGGSV. The Cytoplasmic segment spans residues 1–93; sequence MARAKLPRSP…LFFIKNQRSS (93 aa). A helical transmembrane segment spans residues 94–126; that stretch reads LRIRLFNFSLKLLTCLLYIVRVLLDNPDQGIGC. Over 127 to 153 the chain is Extracellular; that stretch reads WGCTKYNYTFNGSSSEFHWAPILWVER. 2 N-linked (GlcNAc...) asparagine glycosylation sites follow: asparagine 133 and asparagine 137. The helical transmembrane segment at 154–178 threads the bilayer; it reads KMALWVIQVIVATISFLETMLLIYL. Residues 179–192 lie on the Cytoplasmic side of the membrane; that stretch reads SYKGNIWEQIFHVS. The chain crosses the membrane as a helical span at residues 193–208; that stretch reads FVLEMINTLPFIITVF. Residues 209-215 lie on the Extracellular side of the membrane; that stretch reads WPPLRNL. A helical transmembrane segment spans residues 216–233; it reads FIPVFLNCWLAKHALENM. The Cytoplasmic segment spans residues 234–246; it reads INDFHRAILRTQS. Residues 247 to 274 traverse the membrane as a helical segment; the sequence is AMFNQVLILFCTLLCLVFTGTCGIQHLE. At 275-281 the chain is on the extracellular side; the sequence is RAGGNLN. Residues 282–302 constitute an intramembrane region (pore-forming); the sequence is LLTSFYFCIVTFSTVGFGDVT. Valine 296 and glycine 297 together coordinate K(+). The Extracellular segment spans residues 303–304; it reads PK. A helical transmembrane segment spans residues 305 to 338; it reads IWPSQLLVVILICVTLVVLPLQFEELVYLWMERQ. At 339–1239 the chain is on the cytoplasmic side; the sequence is KSGGNYSRHR…NPETRDETQL (901 aa). The 137-residue stretch at 352-488 folds into the RCK N-terminal 1 domain; sequence EKHVVLCVSS…FHVKFADHVV (137 aa). 4 residues coordinate Na(+): leucine 513, histidine 516, serine 538, and asparagine 540. The tract at residues 658–689 is disordered; it reads QNTDCRPSQGGSGGGGGKLTLPTENGSGSRRP. Zn(2+)-binding residues include cysteine 758 and cysteine 759. K(+) is bound by residues arginine 761 and lysine 764. Na(+) contacts are provided by arginine 761 and lysine 764. Zn(2+) is bound by residues cysteine 766 and histidine 768. Residues asparagine 769, tyrosine 771, tyrosine 777, and glycine 778 each coordinate K(+). Tyrosine 771 contributes to the Na(+) binding site. Phenylalanine 779 contacts Na(+). An RCK N-terminal 2 domain is found at 781 to 921; the sequence is NKLIIVSAET…QFRAKDSYSL (141 aa). K(+) contacts are provided by serine 787, leucine 818, aspartate 820, glycine 842, and aspartate 865. Disordered stretches follow at residues 1053 to 1081 and 1212 to 1239; these read REAK…ADPV and TSSS…ETQL. Residues 1213–1230 show a composition bias toward low complexity; it reads SSSQSRKSSCSNKLSSCN.

Belongs to the potassium channel family. Calcium-activated (TC 1.A.1.3) subfamily. KCa4.1/KCNT1 sub-subfamily. As to quaternary structure, homotetramer; which constitutes the Na(+)-activated K(+) channel. Interacts with KCNT2; these heterodimer channels differ from the homomers in their unitary conductance, kinetic behavior, subcellular localization, and response to activation of protein kinase C. Interacts (via C-terminus) with FMR1; this interaction alters gating properties of KCNT1. Interacts with CRBN via its cytoplasmic C-terminus. Does not interact with KCNT2. Phosphorylated by protein kinase C. Phosphorylation of the C-terminal domain increases channel activity. Detected in brain and brainstem, in vestibular and oculomotor nuclei, the medial nucleus of the trapezoid in the auditory system, in olfactory bulb, red nucleus, and deep cerebellar nuclei. Detected in thalamus, substantia nigra, and amygdala (at protein level). Highly expressed in the brain and kidney.

It localises to the cell membrane. The enzyme catalyses K(+)(in) = K(+)(out). Its activity is regulated as follows. Activated by high intracellular Na(+) level. In addition to activation by Na(+), is cooperatively activated by intracellular Cl(-) levels. Activated upon stimulation of G-protein coupled receptors, such as CHRM1 and GRIA1. Functionally, sodium-activated K(+) channel. Acts as an important mediator of neuronal membrane excitability. Contributes to the delayed outward currents. Regulates neuronal bursting in sensory neurons. Contributes to synaptic development and plasticity. The polypeptide is Potassium channel subfamily T member 1 (Kcnt1) (Rattus norvegicus (Rat)).